Consider the following 312-residue polypeptide: Heterotepalin-4 (312 aa).

An N-terminal signal peptide occupies residues 1-22; the sequence is MKSMLVVTISVWLILAPTSTWA. 2 disulfide bridges follow: Cys56/Cys280 and Cys107/Cys128. Residue Glu197 is part of the active site. The propeptide occupies 284–312; it reads YNQNAMFPQLIMSTYYNYMANLGDLFEEF.

The catalysed reaction is Endohydrolysis of the N-glycosidic bond at one specific adenosine on the 28S rRNA.. Its function is as follows. Inhibits protein synthesis in vitro. The polypeptide is Heterotepalin-4 (Phytolacca heterotepala (Mexican pokeweed)).